The primary structure comprises 138 residues: Large ribosomal subunit protein uL16 (138 aa).

The protein belongs to the universal ribosomal protein uL16 family. In terms of assembly, part of the 50S ribosomal subunit.

Its function is as follows. Binds 23S rRNA and is also seen to make contacts with the A and possibly P site tRNAs. The polypeptide is Large ribosomal subunit protein uL16 (Chlamydia trachomatis serovar D (strain ATCC VR-885 / DSM 19411 / UW-3/Cx)).